Reading from the N-terminus, the 809-residue chain is Hydrazine synthase subunit alpha (809 aa).

Positions 1–27 (MGKRKLGVIASAFVAGALVCGSTLVNA) are cleaved as a signal peptide. Zn(2+) is bound at residue C303. Positions 583 and 586 each coordinate heme. H587 lines the Zn(2+) pocket. Heme contacts are provided by Y591, C685, C688, H689, and H772. Residues 633 to 792 (KGVKHGEDVV…AIVEWIDLGA (160 aa)) enclose the Cytochrome c domain.

As to quaternary structure, part of the hydrazine synthase complex that forms an elongated dimer of heterotrimers composed of one alpha, one beta and one gamma subunit. Heme c serves as cofactor.

The protein resides in the anammoxosome. The enzyme catalyses hydrazine + 3 Fe(III)-[cytochrome c] + H2O = nitric oxide + 3 Fe(II)-[cytochrome c] + NH4(+) + 2 H(+). It functions in the pathway nitrogen metabolism. Component of the hydrazine synthase complex that catalyzes the condensation of nitric oxide (NO) with ammonium to form hydrazine. The alpha subunit catalyzes the second half-reaction, i.e. the condensation of hydroxylamine formed in the active site of the gamma subunit with ammonia, yielding hydrazine. Is involved in anaerobic ammonium oxidation (anammox), a biological process in which nitrite is used as the electron acceptor in the conversion of ammonium to dinitrogen gas (N2) and water; this bacterial process has a major role in the Earth's nitrogen cycle and has been estimated to synthesize up to 50% of the dinitrogen gas emitted into our atmosphere from the oceans. The chain is Hydrazine synthase subunit alpha from Kuenenia stuttgartiensis.